The sequence spans 901 residues: HTH-type transcriptional regulator MalT (901 aa).

39–46 (SPAGYGKT) contacts ATP. The 66-residue stretch at 829–894 (ELIRTSPLTQ…DAVQHAQQLL (66 aa)) folds into the HTH luxR-type domain. The H-T-H motif DNA-binding region spans 853 to 872 (NEQIAGELEVAATTIKTHIR).

Belongs to the MalT family. In terms of assembly, monomer in solution. Oligomerizes to an active state in the presence of the positive effectors ATP and maltotriose.

With respect to regulation, activated by ATP and maltotriose, which are both required for DNA binding. Functionally, positively regulates the transcription of the maltose regulon whose gene products are responsible for uptake and catabolism of malto-oligosaccharides. Specifically binds to the promoter region of its target genes, recognizing a short DNA motif called the MalT box. The chain is HTH-type transcriptional regulator MalT from Escherichia fergusonii (strain ATCC 35469 / DSM 13698 / CCUG 18766 / IAM 14443 / JCM 21226 / LMG 7866 / NBRC 102419 / NCTC 12128 / CDC 0568-73).